We begin with the raw amino-acid sequence, 109 residues long: Nucleoid-associated protein ASA_2087 (109 aa).

Disordered stretches follow at residues 1–23 (MFGK…RMQK) and 87–109 (QSKS…KLPF). The span at 11–23 (MKQAQQMQERMQK) shows a compositional bias: low complexity.

This sequence belongs to the YbaB/EbfC family. In terms of assembly, homodimer.

The protein localises to the cytoplasm. It is found in the nucleoid. Its function is as follows. Binds to DNA and alters its conformation. May be involved in regulation of gene expression, nucleoid organization and DNA protection. In Aeromonas salmonicida (strain A449), this protein is Nucleoid-associated protein ASA_2087.